Reading from the N-terminus, the 265-residue chain is Polyprenol monophosphomannose synthase (265 aa).

Positions 1 to 10 are enriched in basic and acidic residues; the sequence is MSVPGEREQG. Residues 1-21 are disordered; sequence MSVPGEREQGAGEDPATVRPT.

It belongs to the glycosyltransferase 2 family. In terms of assembly, interacts with Lnt (also called Ppm2, AC A0QZ13) upon coexpression in E.coli, which increases the PPM synthase activity of this protein.

The protein localises to the cytoplasm. It carries out the reaction a di-trans,poly-cis-dolichyl phosphate + GDP-alpha-D-mannose = a di-trans,poly-cis-dolichyl beta-D-mannosyl phosphate + GDP. Functionally, transfers mannose from GDP-mannose to lipid acceptors to form polyprenol monophosphomannose (PPM); catalytic activity in vitro is enhanced by Lnt (AC A0QZ13). PMM is an alkai-stable sugar donor which adds mannose-phosphate residues to triacylated-PIM2, eventually leading to generation of the cell wall glycolipid lipoglycan modulins lipoarabinomannan (LAM) and lipomannan (LM). This Mycolicibacterium smegmatis (strain ATCC 700084 / mc(2)155) (Mycobacterium smegmatis) protein is Polyprenol monophosphomannose synthase.